The primary structure comprises 485 residues: Regulatory protein ViaA (485 aa).

The protein belongs to the ViaA family. Homodimer. Interacts with RavA.

It localises to the cytoplasm. Its function is as follows. Component of the RavA-ViaA chaperone complex, which may act on the membrane to optimize the function of some of the respiratory chains. ViaA stimulates the ATPase activity of RavA. The chain is Regulatory protein ViaA from Photorhabdus laumondii subsp. laumondii (strain DSM 15139 / CIP 105565 / TT01) (Photorhabdus luminescens subsp. laumondii).